The primary structure comprises 44 residues: Large ribosomal subunit protein bL34 (44 aa).

Belongs to the bacterial ribosomal protein bL34 family.

The sequence is that of Large ribosomal subunit protein bL34 from Ehrlichia ruminantium (strain Gardel).